Here is a 108-residue protein sequence, read N- to C-terminus: UPF0145 protein Ava_0420 (108 aa).

Belongs to the UPF0145 family.

This is UPF0145 protein Ava_0420 from Trichormus variabilis (strain ATCC 29413 / PCC 7937) (Anabaena variabilis).